The chain runs to 397 residues: Phosphoglycerate kinase (397 aa).

Substrate-binding positions include 21-23 (DFN), R37, 60-63 (HLGR), R119, and R152. Residues K202, G294, E325, and 351–354 (GGDS) contribute to the ATP site.

It belongs to the phosphoglycerate kinase family. In terms of assembly, monomer.

Its subcellular location is the cytoplasm. It carries out the reaction (2R)-3-phosphoglycerate + ATP = (2R)-3-phospho-glyceroyl phosphate + ADP. It participates in carbohydrate degradation; glycolysis; pyruvate from D-glyceraldehyde 3-phosphate: step 2/5. The sequence is that of Phosphoglycerate kinase from Pseudothermotoga lettingae (strain ATCC BAA-301 / DSM 14385 / NBRC 107922 / TMO) (Thermotoga lettingae).